Consider the following 115-residue polypeptide: Ribonuclease P protein component (115 aa).

The protein belongs to the RnpA family. As to quaternary structure, consists of a catalytic RNA component (M1 or rnpB) and a protein subunit.

It carries out the reaction Endonucleolytic cleavage of RNA, removing 5'-extranucleotides from tRNA precursor.. In terms of biological role, RNaseP catalyzes the removal of the 5'-leader sequence from pre-tRNA to produce the mature 5'-terminus. It can also cleave other RNA substrates such as 4.5S RNA. The protein component plays an auxiliary but essential role in vivo by binding to the 5'-leader sequence and broadening the substrate specificity of the ribozyme. The polypeptide is Ribonuclease P protein component (Staphylococcus epidermidis (strain ATCC 35984 / DSM 28319 / BCRC 17069 / CCUG 31568 / BM 3577 / RP62A)).